We begin with the raw amino-acid sequence, 403 residues long: G2/mitotic-specific cyclin-B1 (403 aa).

The protein belongs to the cyclin family. Cyclin AB subfamily. Interacts with the CDC2 protein kinase to form a serine/threonine kinase holoenzyme complex also known as maturation promoting factor (MPF). The cyclin subunit imparts substrate specificity to the complex.

Functionally, essential for the control of the cell cycle at the G2/M (mitosis) transition. In Anguilla japonica (Japanese eel), this protein is G2/mitotic-specific cyclin-B1 (ccnb1).